Here is a 354-residue protein sequence, read N- to C-terminus: DNA-binding protein EMBP-1 (354 aa).

3 disordered regions span residues 1-24, 106-193, and 230-273; these read MASSSSATSGDDRPPAAGGGTPAQ, SAAG…RSAS, and EVNA…RKQQ. Composition is skewed to low complexity over residues 127–140 and 232–245; these read SSSGSGDAGSQGSS and NAAASSQSNASLSQ. Residues 246–265 are compositionally biased toward basic and acidic residues; the sequence is MDERELKRERRKQSNRESAR. A bZIP domain is found at 250-313; sequence ELKRERRKQS…KTMETENKKL (64 aa). The tract at residues 252–271 is basic motif; the sequence is KRERRKQSNRESARRSRLRK. The tract at residues 278 to 299 is leucine-zipper; that stretch reads LAQKVSELTAANGTLRSELDQL.

Belongs to the bZIP family. As to quaternary structure, heterodimer.

The protein resides in the nucleus. Its function is as follows. Interacts specifically with the 8-bp sequence 5'-CACGTGGC-3'in the abscisic acid response element (ABARE). Also binds to the hexamer motif 5'-ACGTCA-3' of histone gene promoters. The sequence is that of DNA-binding protein EMBP-1 from Triticum aestivum (Wheat).